The following is a 677-amino-acid chain: DNA polymerase epsilon subunit B (677 aa).

This sequence belongs to the DNA polymerase epsilon subunit B family. In terms of assembly, heterotetramer. Consists of four subunits: POL2, DPB2, DPB3 and DPB4.

The protein localises to the nucleus. As accessory component of the DNA polymerase epsilon (DNA polymerase II) participates in chromosomal DNA replication. This chain is DNA polymerase epsilon subunit B (DPB2), found in Eremothecium gossypii (strain ATCC 10895 / CBS 109.51 / FGSC 9923 / NRRL Y-1056) (Yeast).